The sequence spans 47 residues: Defensin NsD7 (47 aa).

Cystine bridges form between C3/C47, C14/C34, C20/C41, and C24/C43. Positions 4, 33, 36, and 39 each coordinate a 1,2-diacyl-sn-glycero-3-phosphate.

Belongs to the DEFL family. In the presence of phosphatidic acid (PA), forms right-handed double helices which tend to bundle into fibrils. Each helix is a repetition of dimers containing 2 bound molecules of PA per dimer. Dimers are arranged orthogonally in a tip-to-tip configuration with 1 molecule of PA located at the dimer contact interface. Association of 2 helices to form a double helix depends on intercalating isoleucine residues Ile-15 and Ile-37. Bundling of double helices into fibrils depends on Arg-26.

It is found in the vacuole. In terms of biological role, plant defense peptide. Disrupts membranes containing phosphatidic acid (PA) via a PA-dependent oligomerization process. The polypeptide is Defensin NsD7 (Nicotiana suaveolens (Australian tobacco)).